The sequence spans 397 residues: Acetate kinase (397 aa).

Asn-8 serves as a coordination point for Mg(2+). Position 15 (Lys-15) interacts with ATP. Position 89 (Arg-89) interacts with substrate. The Proton donor/acceptor role is filled by Asp-146. ATP-binding positions include 206 to 210 (HLGNG), 281 to 283 (DLR), and 329 to 333 (GVGEN). Glu-382 lines the Mg(2+) pocket.

Belongs to the acetokinase family. In terms of assembly, homodimer. It depends on Mg(2+) as a cofactor. Requires Mn(2+) as cofactor.

The protein localises to the cytoplasm. The catalysed reaction is acetate + ATP = acetyl phosphate + ADP. Its pathway is metabolic intermediate biosynthesis; acetyl-CoA biosynthesis; acetyl-CoA from acetate: step 1/2. Its function is as follows. Catalyzes the formation of acetyl phosphate from acetate and ATP. Can also catalyze the reverse reaction. In Bacillus anthracis, this protein is Acetate kinase.